The following is a 408-amino-acid chain: uncharacterized protein (408 aa).

Residues 376-386 are compositionally biased toward polar residues; that stretch reads NELNDPNSVYN. The tract at residues 376–408 is disordered; sequence NELNDPNSVYNSPEFDHQGDQKKLTEENGCVVQ. Basic and acidic residues predominate over residues 389 to 401; it reads EFDHQGDQKKLTE.

This is an uncharacterized protein from Acanthamoeba polyphaga (Amoeba).